Consider the following 396-residue polypeptide: Argininosuccinate synthase (396 aa).

Ala9–Ser17 provides a ligand contact to ATP. L-citrulline is bound at residue Tyr85. Gly115 contacts ATP. L-aspartate-binding residues include Thr117, Asn121, and Asp122. Position 121 (Asn121) interacts with L-citrulline. L-citrulline is bound by residues Arg125, Ser173, Glu258, and Tyr270.

The protein belongs to the argininosuccinate synthase family. Type 1 subfamily. Homotetramer.

It localises to the cytoplasm. It carries out the reaction L-citrulline + L-aspartate + ATP = 2-(N(omega)-L-arginino)succinate + AMP + diphosphate + H(+). It functions in the pathway amino-acid biosynthesis; L-arginine biosynthesis; L-arginine from L-ornithine and carbamoyl phosphate: step 2/3. The protein is Argininosuccinate synthase of Streptococcus agalactiae serotype V (strain ATCC BAA-611 / 2603 V/R).